The sequence spans 272 residues: HMP-PP phosphatase (272 aa).

The Nucleophile role is filled by aspartate 8. Mg(2+)-binding residues include aspartate 8, aspartate 10, and aspartate 212.

This sequence belongs to the HAD-like hydrolase superfamily. Cof family. The cofactor is Mg(2+).

It catalyses the reaction 4-amino-2-methyl-5-(diphosphooxymethyl)pyrimidine + H2O = 4-amino-2-methyl-5-(phosphooxymethyl)pyrimidine + phosphate + H(+). Catalyzes the hydrolysis of 4-amino-2-methyl-5-hydroxymethylpyrimidine pyrophosphate (HMP-PP) to 4-amino-2-methyl-5-hydroxymethylpyrimidine phosphate (HMP-P). The protein is HMP-PP phosphatase of Salmonella typhi.